A 222-amino-acid polypeptide reads, in one-letter code: MDGTDAEAPGQTAPSRAESLVAHAEASISEDALLAAARERAVDIGAGAVTPAVGALLSLLTKLSGGKAIAEVGTGAGVSGLWLLSGMSDDGVLTTIDIEPEYLRLAKQAFAEAGIGPSRTRLIGGRAQEVLTRLADESYDLVFIDADPIDQPDYVVEGVRLLRPGGVIVVHRAALGGRAGDPAARDAEVVAVREAARLIAEDERLTPALVPLGDGILAAVRD.

Residues Val49, Glu71, 73–74, Ser79, Asp97, and Ile98 each bind S-adenosyl-L-methionine; that span reads GT. Asp145 is a substrate binding site. Asp147 contacts S-adenosyl-L-methionine.

The protein belongs to the class I-like SAM-binding methyltransferase superfamily. Cation-dependent O-methyltransferase family.

This is Putative O-methyltransferase MAV_1364 from Mycobacterium avium (strain 104).